Reading from the N-terminus, the 278-residue chain is Formyltetrahydrofolate deformylase (278 aa).

The ACT domain occupies 6–85 (ILLTDCPDDK…RLIGTQRKRI (80 aa)). Residue aspartate 223 is part of the active site.

This sequence belongs to the PurU family.

It carries out the reaction (6R)-10-formyltetrahydrofolate + H2O = (6S)-5,6,7,8-tetrahydrofolate + formate + H(+). It functions in the pathway purine metabolism; IMP biosynthesis via de novo pathway; formate from 10-formyl-5,6,7,8-tetrahydrofolate: step 1/1. In terms of biological role, catalyzes the hydrolysis of 10-formyltetrahydrofolate (formyl-FH4) to formate and tetrahydrofolate (FH4). The sequence is that of Formyltetrahydrofolate deformylase from Haemophilus influenzae (strain ATCC 51907 / DSM 11121 / KW20 / Rd).